The following is a 340-amino-acid chain: Homeobox protein DBX2 (340 aa).

Positions 185-244 form a DNA-binding region, homeobox; the sequence is GILRRAVFSEDQRKALEKMFQKQKYISKTDRKKLAINLGLKESQVKIWFQNRRMKWRNSK. Positions 283 to 313 are disordered; it reads QQHPSPGWRENSPEPSERLIQGSPGAEALPP.

Belongs to the H2.0 homeobox family.

The protein localises to the nucleus. The sequence is that of Homeobox protein DBX2 (DBX2) from Bos taurus (Bovine).